The following is a 197-amino-acid chain: Pyridoxal 5'-phosphate synthase subunit PdxT (197 aa).

50–52 (GES) contributes to the L-glutamine binding site. The active-site Nucleophile is the C82. Residues R111 and 140 to 141 (IR) contribute to the L-glutamine site. Active-site charge relay system residues include H176 and E178.

The protein belongs to the glutaminase PdxT/SNO family. In terms of assembly, in the presence of PdxS, forms a dodecamer of heterodimers. Only shows activity in the heterodimer.

It carries out the reaction aldehydo-D-ribose 5-phosphate + D-glyceraldehyde 3-phosphate + L-glutamine = pyridoxal 5'-phosphate + L-glutamate + phosphate + 3 H2O + H(+). It catalyses the reaction L-glutamine + H2O = L-glutamate + NH4(+). It functions in the pathway cofactor biosynthesis; pyridoxal 5'-phosphate biosynthesis. Functionally, catalyzes the hydrolysis of glutamine to glutamate and ammonia as part of the biosynthesis of pyridoxal 5'-phosphate. The resulting ammonia molecule is channeled to the active site of PdxS. This Streptomyces griseus subsp. griseus (strain JCM 4626 / CBS 651.72 / NBRC 13350 / KCC S-0626 / ISP 5235) protein is Pyridoxal 5'-phosphate synthase subunit PdxT.